The sequence spans 248 residues: 3-deoxy-manno-octulosonate cytidylyltransferase (248 aa).

It belongs to the KdsB family.

The protein resides in the cytoplasm. The enzyme catalyses 3-deoxy-alpha-D-manno-oct-2-ulosonate + CTP = CMP-3-deoxy-beta-D-manno-octulosonate + diphosphate. It participates in nucleotide-sugar biosynthesis; CMP-3-deoxy-D-manno-octulosonate biosynthesis; CMP-3-deoxy-D-manno-octulosonate from 3-deoxy-D-manno-octulosonate and CTP: step 1/1. The protein operates within bacterial outer membrane biogenesis; lipopolysaccharide biosynthesis. Functionally, activates KDO (a required 8-carbon sugar) for incorporation into bacterial lipopolysaccharide in Gram-negative bacteria. This chain is 3-deoxy-manno-octulosonate cytidylyltransferase, found in Shigella dysenteriae serotype 1 (strain Sd197).